Consider the following 143-residue polypeptide: Hemoglobin subunit alpha (143 aa).

An N-acetylserine modification is found at serine 2. Residues 2-143 (SLSDTDKAVV…LALALSEKYR (142 aa)) form the Globin domain. Histidine 60 lines the O2 pocket. Histidine 89 is a heme b binding site.

It belongs to the globin family. Heterotetramer of two alpha chains and two beta chains. As to expression, red blood cells.

In terms of biological role, involved in oxygen transport from gills to the various peripheral tissues. The sequence is that of Hemoglobin subunit alpha (hbaa1) from Danio rerio (Zebrafish).